Reading from the N-terminus, the 441-residue chain is MAGUK p55 subfamily member 4 (441 aa).

One can recognise a PDZ domain in the interval 1–84; the sequence is MRTVCLVKNQ…TIMFKVIPVS (84 aa). The SH3 domain maps to 91–161; it reads QTTVYVRAMI…PSNHLLKRKQ (71 aa). Residues 232–421 enclose the Guanylate kinase-like domain; sequence HRLIVLVGPS…ARAQLLSAIQ (190 aa). Positions 373 to 430 form a coiled coil; that stretch reads VDMKFKDEDLQEMEELAQKMESQFGQFFDHVIVNDNLQDARAQLLSAIQKAEEELQWV.

This sequence belongs to the MAGUK family. Interacts with MPDZ. May interact with GRIA2. Forms a complex with CRB1 and PALS1. Interacts with FASLG. In terms of tissue distribution, highly expressed in brain and detected in lung, and bone (at protein level). Also expressed in intestine and spleen.

The protein resides in the cytoplasm. Functionally, may play a role in retinal photoreceptors development. This is MAGUK p55 subfamily member 4 (Mpp4) from Rattus norvegicus (Rat).